The chain runs to 233 residues: Large ribosomal subunit protein uL1 (233 aa).

The protein belongs to the universal ribosomal protein uL1 family. As to quaternary structure, part of the 50S ribosomal subunit.

Binds directly to 23S rRNA. The L1 stalk is quite mobile in the ribosome, and is involved in E site tRNA release. Functionally, protein L1 is also a translational repressor protein, it controls the translation of the L11 operon by binding to its mRNA. The sequence is that of Large ribosomal subunit protein uL1 from Shewanella denitrificans (strain OS217 / ATCC BAA-1090 / DSM 15013).